The chain runs to 637 residues: Chaperone protein DnaK (637 aa).

Position 198 is a phosphothreonine; by autocatalysis (Thr198). Residues 597–637 are disordered; the sequence is MYQQAAQESGQTEGAAQDPKGAAQDDDVVDADFEEVKDHKK. The segment covering 600-610 has biased composition (polar residues); sequence QAAQESGQTEG. Residues 620–629 show a composition bias toward acidic residues; it reads QDDDVVDADF.

The protein belongs to the heat shock protein 70 family.

Its function is as follows. Acts as a chaperone. The sequence is that of Chaperone protein DnaK from Desulforapulum autotrophicum (strain ATCC 43914 / DSM 3382 / VKM B-1955 / HRM2) (Desulfobacterium autotrophicum).